The chain runs to 121 residues: Large ribosomal subunit protein uL18 (121 aa).

The protein belongs to the universal ribosomal protein uL18 family. Part of the 50S ribosomal subunit; part of the 5S rRNA/L5/L18/L25 subcomplex. Contacts the 5S and 23S rRNAs.

Functionally, this is one of the proteins that bind and probably mediate the attachment of the 5S RNA into the large ribosomal subunit, where it forms part of the central protuberance. In Polaromonas sp. (strain JS666 / ATCC BAA-500), this protein is Large ribosomal subunit protein uL18.